The chain runs to 239 residues: Ribosomal RNA small subunit methyltransferase G (239 aa).

Residues glycine 77, phenylalanine 82, 128-129 (AE), and arginine 147 contribute to the S-adenosyl-L-methionine site. The segment at 216–239 (EKKKQTPKKYPRKPGTPNKSPIEG) is disordered.

The protein belongs to the methyltransferase superfamily. RNA methyltransferase RsmG family.

It localises to the cytoplasm. Its function is as follows. Specifically methylates the N7 position of guanine in position 535 of 16S rRNA. The chain is Ribosomal RNA small subunit methyltransferase G from Bacillus pumilus (strain SAFR-032).